Here is a 468-residue protein sequence, read N- to C-terminus: F-box/LRR-repeat protein At4g14096 (468 aa).

Positions 7-60 constitute an F-box domain; it reads RDIISSLPEAISCHILSFLPTKEAASTSVLSKKWRYLFAFVPNLDLDESVYLNP. 6 LRR repeats span residues 114 to 136, 138 to 167, 169 to 194, 216 to 241, 292 to 323, and 324 to 349; these read VSDL…MFLS, TLVR…YIDS, YFEK…VLDD, STQV…KFTD, TLYL…TIES, and NPEV…IFQG.

The polypeptide is F-box/LRR-repeat protein At4g14096 (Arabidopsis thaliana (Mouse-ear cress)).